The chain runs to 131 residues: uncharacterized protein (131 aa).

Residues 1–67 (MCSARKLLRG…HSGEPIGDDY (67 aa)) are disordered. A Phosphoserine modification is found at S14. Residues 99 to 119 (VVVLFFWLMLWFLGLQALGLV) form a helical membrane-spanning segment.

The protein belongs to the FAM241 family.

The protein localises to the membrane. This is an uncharacterized protein from Mus musculus (Mouse).